Here is a 37-residue protein sequence, read N- to C-terminus: MKVRASVKKICRNCKIVRRNGVVRVICSDGRHKQRQG.

This sequence belongs to the bacterial ribosomal protein bL36 family.

The chain is Large ribosomal subunit protein bL36 from Alkalilimnicola ehrlichii (strain ATCC BAA-1101 / DSM 17681 / MLHE-1).